We begin with the raw amino-acid sequence, 105 residues long: Defensin-like protein 106 (105 aa).

A signal peptide spans 1 to 24 (MANTPKTLIAFVFSVIVIISYVHC). 4 disulfides stabilise this stretch: Cys-57-Cys-94, Cys-63-Cys-87, Cys-73-Cys-92, and Cys-77-Cys-93.

Belongs to the DEFL family.

It localises to the secreted. The sequence is that of Defensin-like protein 106 from Arabidopsis thaliana (Mouse-ear cress).